A 61-amino-acid chain; its full sequence is MDTKLLDILACPITKGPLKLSADKTELISKGAGLAYPIRDGIPVMLESEARTLTDDERLDK.

It belongs to the UPF0434 family.

This is UPF0434 protein Pput_3813 from Pseudomonas putida (strain ATCC 700007 / DSM 6899 / JCM 31910 / BCRC 17059 / LMG 24140 / F1).